The following is a 342-amino-acid chain: Anthranilate phosphoribosyltransferase (342 aa).

5-phospho-alpha-D-ribose 1-diphosphate contacts are provided by residues glycine 81, 84-85 (GD), threonine 89, 91-94 (NVST), 109-117 (KHGNRAASS), and alanine 121. Glycine 81 serves as a coordination point for anthranilate. Mg(2+) is bound at residue serine 93. Asparagine 112 contributes to the anthranilate binding site. Arginine 167 is an anthranilate binding site. Residues aspartate 226 and glutamate 227 each contribute to the Mg(2+) site.

The protein belongs to the anthranilate phosphoribosyltransferase family. In terms of assembly, homodimer. Mg(2+) serves as cofactor.

It catalyses the reaction N-(5-phospho-beta-D-ribosyl)anthranilate + diphosphate = 5-phospho-alpha-D-ribose 1-diphosphate + anthranilate. The protein operates within amino-acid biosynthesis; L-tryptophan biosynthesis; L-tryptophan from chorismate: step 2/5. Functionally, catalyzes the transfer of the phosphoribosyl group of 5-phosphorylribose-1-pyrophosphate (PRPP) to anthranilate to yield N-(5'-phosphoribosyl)-anthranilate (PRA). The sequence is that of Anthranilate phosphoribosyltransferase from Beijerinckia indica subsp. indica (strain ATCC 9039 / DSM 1715 / NCIMB 8712).